The primary structure comprises 217 residues: U exon protein (217 aa).

Disordered regions lie at residues 68–110 (SKIF…TNHG) and 170–217 (EKEA…RQGR). The span at 202-217 (GGFQQPTGANQARQGR) shows a compositional bias: polar residues.

It belongs to the adenoviridae U exon protein family.

The protein localises to the host nucleus. Its subcellular location is the host nucleoplasm. It localises to the host nucleolus. Functionally, might play a role in viral replication since it is associated with viral replication centers. Seems to have an effect on DBP localization. The polypeptide is U exon protein (Homo sapiens (Human)).